The chain runs to 882 residues: Alanine--tRNA ligase (882 aa).

Zn(2+)-binding residues include His-568, His-572, Cys-670, and His-674.

Belongs to the class-II aminoacyl-tRNA synthetase family. The cofactor is Zn(2+).

The protein resides in the cytoplasm. It catalyses the reaction tRNA(Ala) + L-alanine + ATP = L-alanyl-tRNA(Ala) + AMP + diphosphate. Functionally, catalyzes the attachment of alanine to tRNA(Ala) in a two-step reaction: alanine is first activated by ATP to form Ala-AMP and then transferred to the acceptor end of tRNA(Ala). Also edits incorrectly charged Ser-tRNA(Ala) and Gly-tRNA(Ala) via its editing domain. The polypeptide is Alanine--tRNA ligase (Lactobacillus johnsonii (strain CNCM I-12250 / La1 / NCC 533)).